Here is a 130-residue protein sequence, read N- to C-terminus: DNA-directed RNA polymerase subunit omega (130 aa).

Residues 110-130 are disordered; it reads EELLKGLEGLAPPEEQPEEDE.

This sequence belongs to the RNA polymerase subunit omega family. As to quaternary structure, the RNAP catalytic core consists of 2 alpha, 1 beta, 1 beta' and 1 omega subunit. When a sigma factor is associated with the core the holoenzyme is formed, which can initiate transcription.

It catalyses the reaction RNA(n) + a ribonucleoside 5'-triphosphate = RNA(n+1) + diphosphate. Its function is as follows. Promotes RNA polymerase assembly. Latches the N- and C-terminal regions of the beta' subunit thereby facilitating its interaction with the beta and alpha subunits. This chain is DNA-directed RNA polymerase subunit omega, found in Bradyrhizobium sp. (strain BTAi1 / ATCC BAA-1182).